Here is a 614-residue protein sequence, read N- to C-terminus: Nuclear receptor subfamily 1 group D member 1 (614 aa).

Residues 1–48 (MTTLDSNNNTGGVITYIGSSGSSPNRTSPESLYSDSSNGSFQSLTQGC) are compositionally biased toward polar residues. Residues 1-70 (MTTLDSNNNT…TQDPARSFGS (70 aa)) form a required for phosphorylation by CSNK1E and cytoplasmic localization region. The segment at 1–120 (MTTLDSNNNT…GNRVSPSKST (120 aa)) is disordered. The tract at residues 1–129 (MTTLDSNNNT…TSNITKLNGM (129 aa)) is modulating. Residues 49 to 285 (PTYFPPSPTG…PPRSPSPEPT (237 aa)) form a crucial for activation of GJA1 region. Ser55 and Ser59 each carry phosphoserine; by GSK3-beta. Low complexity predominate over residues 69 to 103 (GSIPPSLGDDGSPSSSSSSSSSSSSSFYNGSPPGG). Residues 130 to 206 (VLLCKVCGDV…VGMSRDAVRF (77 aa)) constitute a DNA-binding region (nuclear receptor). NR C4-type zinc fingers lie at residues 133 to 153 (CKVCGDVASGFHYGVHACEGC) and 170 to 194 (CLKNENCSIVRINRNRCQQCRFKKC). An N6-acetyllysine; by KAT5 mark is found at Lys192 and Lys193. Positions 233–286 (SSQCPLETPPTQHPTPGPMGPSPPPAPAPSPLVGFSQFPQQLTPPRSPSPEPTV) are disordered. Residues 239–262 (ETPPTQHPTPGPMGPSPPPAPAPS) are compositionally biased toward pro residues. The residue at position 275 (Thr275) is a Phosphothreonine; by CDK1. An NR LBD domain is found at 285-614 (TVEDVISQVA…KLLSFRVDAQ (330 aa)). Heme is bound at residue Cys418. Residue Lys591 is modified to N6-acetyllysine. His602 lines the heme pocket.

This sequence belongs to the nuclear hormone receptor family. NR1 subfamily. In terms of assembly, binds DNA as a monomer or a homodimer. Interacts with C1D, NR2E3, SP1 and ZNHIT1. Interacts with OPHN1 (via C-terminus). Interacts with PER2; the interaction associates PER2 to BMAL1 promoter region. Interacts with CRY1. Interacts with CCAR2. Interacts with SIAH2. Interacts with FBXW7 and CDK1. Interacts with HUWE1. Interacts with NR0B2. Interacts with NFIL3. Interacts (via domain NR LBD) with HSP90AA1 and HSP90AB1. In terms of processing, ubiquitinated, leading to its proteasomal degradation. Ubiquitinated by the SCF(FBXW7) complex when phosphorylated by CDK1 leading to its proteasomal degradation. Ubiquitinated by SIAH2; leading to its proteasomal degradation. Rapidly ubiquitinated in response to inflammatory triggers and sumoylation is a prerequisite to its ubiquitination. Post-translationally, sumoylated by UBE2I, desumoylated by SENP1, and sumoylation is a prerequisite to its ubiquitination. Phosphorylated by CSNK1E; phosphorylation enhances its cytoplasmic localization. In terms of processing, undergoes lysosome-mediated degradation in a time-dependent manner in the liver. As to expression, expressed in all tissues and cell lines examined. Expressed at high levels in some squamous carcinoma cell lines.

The protein resides in the nucleus. It localises to the cytoplasm. It is found in the cell projection. The protein localises to the dendrite. Its subcellular location is the dendritic spine. Its function is as follows. Transcriptional repressor which coordinates circadian rhythm and metabolic pathways in a heme-dependent manner. Integral component of the complex transcription machinery that governs circadian rhythmicity and forms a critical negative limb of the circadian clock by directly repressing the expression of core clock components BMAL1, CLOCK and CRY1. Also regulates genes involved in metabolic functions, including lipid and bile acid metabolism, adipogenesis, gluconeogenesis and the macrophage inflammatory response. Acts as a receptor for heme which stimulates its interaction with the NCOR1/HDAC3 corepressor complex, enhancing transcriptional repression. Recognizes two classes of DNA response elements within the promoter of its target genes and can bind to DNA as either monomers or homodimers, depending on the nature of the response element. Binds as a monomer to a response element composed of the consensus half-site motif 5'-[A/G]GGTCA-3' preceded by an A/T-rich 5' sequence (RevRE), or as a homodimer to a direct repeat of the core motif spaced by two nucleotides (RevDR-2). Acts as a potent competitive repressor of ROR alpha (RORA) function and regulates the levels of its ligand heme by repressing the expression of PPARGC1A, a potent inducer of heme synthesis. Regulates lipid metabolism by repressing the expression of APOC3 and by influencing the activity of sterol response element binding proteins (SREBPs); represses INSIG2 which interferes with the proteolytic activation of SREBPs which in turn govern the rhythmic expression of enzymes with key functions in sterol and fatty acid synthesis. Regulates gluconeogenesis via repression of G6PC1 and PEPCK and adipocyte differentiation via repression of PPARG. Regulates glucagon release in pancreatic alpha-cells via the AMPK-NAMPT-SIRT1 pathway and the proliferation, glucose-induced insulin secretion and expression of key lipogenic genes in pancreatic-beta cells. Positively regulates bile acid synthesis by increasing hepatic expression of CYP7A1 via repression of NR0B2 and NFIL3 which are negative regulators of CYP7A1. Modulates skeletal muscle oxidative capacity by regulating mitochondrial biogenesis and autophagy; controls mitochondrial biogenesis and respiration by interfering with the STK11-PRKAA1/2-SIRT1-PPARGC1A signaling pathway. Represses the expression of SERPINE1/PAI1, an important modulator of cardiovascular disease and the expression of inflammatory cytokines and chemokines in macrophages. Represses gene expression at a distance in macrophages by inhibiting the transcription of enhancer-derived RNAs (eRNAs). Plays a role in the circadian regulation of body temperature and negatively regulates thermogenic transcriptional programs in brown adipose tissue (BAT); imposes a circadian oscillation in BAT activity, increasing body temperature when awake and depressing thermogenesis during sleep. In concert with NR2E3, regulates transcriptional networks critical for photoreceptor development and function. In addition to its activity as a repressor, can also act as a transcriptional activator. In the ovarian granulosa cells acts as a transcriptional activator of STAR which plays a role in steroid biosynthesis. In collaboration with SP1, activates GJA1 transcription in a heme-independent manner. Represses the transcription of CYP2B10, CYP4A10 and CYP4A14. Represses the transcription of CES2. Represses and regulates the circadian expression of TSHB in a NCOR1-dependent manner. Negatively regulates the protein stability of NR3C1 and influences the time-dependent subcellular distribution of NR3C1, thereby affecting its transcriptional regulatory activity. Plays a critical role in the circadian control of neutrophilic inflammation in the lung; under resting, non-stress conditions, acts as a rhythmic repressor to limit inflammatory activity whereas in the presence of inflammatory triggers undergoes ubiquitin-mediated degradation thereby relieving inhibition of the inflammatory response. Plays a key role in the circadian regulation of microglial activation and neuroinflammation; suppresses microglial activation through the NF-kappaB pathway in the central nervous system. Plays a role in the regulation of the diurnal rhythms of lipid and protein metabolism in the skeletal muscle via transcriptional repression of genes controlling lipid and amino acid metabolism in the muscle. This chain is Nuclear receptor subfamily 1 group D member 1 (NR1D1), found in Ovis aries (Sheep).